The following is a 500-amino-acid chain: Probable malate:quinone oxidoreductase (500 aa).

It belongs to the MQO family. FAD serves as cofactor.

It carries out the reaction (S)-malate + a quinone = a quinol + oxaloacetate. It participates in carbohydrate metabolism; tricarboxylic acid cycle; oxaloacetate from (S)-malate (quinone route): step 1/1. This is Probable malate:quinone oxidoreductase from Corynebacterium aurimucosum (strain ATCC 700975 / DSM 44827 / CIP 107346 / CN-1) (Corynebacterium nigricans).